The following is a 581-amino-acid chain: Arginine--tRNA ligase (581 aa).

A 'HIGH' region motif is present at residues 123–133; the sequence is PNVAKEMHVGH.

Belongs to the class-I aminoacyl-tRNA synthetase family. Monomer.

It localises to the cytoplasm. The catalysed reaction is tRNA(Arg) + L-arginine + ATP = L-arginyl-tRNA(Arg) + AMP + diphosphate. The chain is Arginine--tRNA ligase from Blochmanniella pennsylvanica (strain BPEN).